The chain runs to 198 residues: Cyclin-dependent kinase inhibitor 1B (198 aa).

Positions 1–11 are enriched in polar residues; sequence MSNVRVSNGSP. The interval 1–22 is disordered; the sequence is MSNVRVSNGSPSLERMDARQAE. The residue at position 10 (serine 10) is a Phosphoserine; by UHMK1. The interval 51–91 is interaction with CDK2; that stretch reads DMEEASQRKWNFDFQNHKPLEGKYEWQEVEKGSLPEFYYRP. Position 74 is a phosphotyrosine; by SRC (tyrosine 74). Positions 87–198 are disordered; the sequence is FYYRPPRPPK…KKPGLRRRQT (112 aa). The residue at position 88 (tyrosine 88) is a Phosphotyrosine; by ABL, LYN and SRC. Tyrosine 89 carries the post-translational modification Phosphotyrosine. Positions 104–113 are enriched in polar residues; the sequence is QESQDVSGNR. Over residues 126-137 the composition is skewed to basic and acidic residues; sequence EDTHLVDQKTDT. Positions 153 to 169 match the Nuclear localization signal motif; the sequence is KRPATDDSSPQNKRANR. Threonine 157 is subject to Phosphothreonine; by CaMK1, PKB/AKT1 and PIM1. Residue threonine 170 is modified to Phosphothreonine. The segment covering 175-186 has biased composition (polar residues); sequence SDGSPNAGSVEQ. A Phosphothreonine; by PKB/AKT1, CDK1 and CDK2 modification is found at threonine 187. Threonine 198 is subject to Phosphothreonine; by CaMK1, PKB/AKT1, RPS6KA1, RPS6KA3 and PIM1.

This sequence belongs to the CDI family. Forms a ternary complex composed of CCNE1, CDK2 and CDKN1B. Interacts directly with CCNE1; the interaction is inhibited by CDK2-dependent phosphorylation on Thr-187. Interacts with COPS5, subunit of the COP9 signalosome complex; the interaction leads to CDKN1B degradation. Interacts with NUP50; the interaction leads to nuclear import and degradation of phosphorylated CDKN1B. Interacts with CCND1 and SNX6. Interacts (Thr-198-phosphorylated form) with 14-3-3 proteins, binds strongly YWHAQ, weakly YWHAE and YWHAH, but not YWHAB nor YWHAZ; the interaction with YWHAQ results in translocation to the cytoplasm. Interacts with AKT1 and LYN; the interactions lead to cytoplasmic mislocation, phosphorylation of CDKN1B and inhibition of cell cycle arrest. Forms a ternary complex with CCNA2 and CDK2; CDKN1B inhibits the kinase activity of CDK2 through conformational rearrangements. Interacts (unphosphorylated form) with CDK2. Forms a complex with CDK2 and SPDYA, but does not directly interact with SPDYA. Forms a ternary complex composed of cyclin D, CDK4 and CDKN1B. Interacts (phosphorylated on Tyr-88 and Tyr-89) with CDK4; the interaction is required for cyclin D and CDK4 complex assembly, induces nuclear translocation and activates the CDK4 kinase activity. Interacts with GRB2. Interacts with PIM1. Identified in a complex with SKP1, SKP2 and CKS1B. Interacts with UHMK1; the interaction leads to cytoplasmic mislocation, phosphorylation of CDKN1B and inhibition of cell cycle arrest. Also interacts with CDK1. Dephosphorylated on Thr-187 by PPM1H, leading to CDKN1B stability. Phosphorylated; phosphorylation occurs on serine, threonine and tyrosine residues. Phosphorylation on Ser-10 is the major site of phosphorylation in resting cells, takes place at the G(0)-G(1) phase and leads to protein stability. Phosphorylation on other sites is greatly enhanced by mitogens, growth factors, cMYC and in certain cancer cell lines. The phosphorylated form found in the cytoplasm is inactivate. Phosphorylation on Thr-198 is required for interaction with 14-3-3 proteins. Phosphorylation on Thr-187, by CDK1 and CDK2 leads to protein ubiquitination and proteasomal degradation. Tyrosine phosphorylation promotes this process. Phosphorylation by PKB/AKT1 can be suppressed by LY294002, an inhibitor of the catalytic subunit of PI3K. Phosphorylation on Tyr-88 and Tyr-89 has no effect on binding CDK2, but is required for binding CDK4. Dephosphorylated on tyrosine residues by G-CSF. Dephosphorylated on Thr-187 by PPM1H, leading to CDKN1B stability. In terms of processing, ubiquitinated; in the cytoplasm by the KPC complex (composed of RNF123/KPC1 and UBAC1/KPC2) and, in the nucleus, by SCF(SKP2). The latter requires prior phosphorylation on Thr-187. Ubiquitinated; by a TRIM21-containing SCF(SKP2)-like complex; leads to its degradation. Post-translationally, subject to degradation in the lysosome. Interaction with SNX6 promotes lysosomal degradation.

It localises to the nucleus. The protein localises to the cytoplasm. The protein resides in the endosome. Important regulator of cell cycle progression. Inhibits the kinase activity of CDK2 bound to cyclin A, but has little inhibitory activity on CDK2 bound to SPDYA. Involved in G1 arrest. Potent inhibitor of cyclin E- and cyclin A-CDK2 complexes. Forms a complex with cyclin type D-CDK4 complexes and is involved in the assembly, stability, and modulation of CCND1-CDK4 complex activation. Acts either as an inhibitor or an activator of cyclin type D-CDK4 complexes depending on its phosphorylation state and/or stoichometry. This is Cyclin-dependent kinase inhibitor 1B (CDKN1B) from Felis catus (Cat).